The chain runs to 157 residues: NADPH-dependent 7-cyano-7-deazaguanine reductase (157 aa).

Residue C55 is the Thioimide intermediate of the active site. Catalysis depends on D62, which acts as the Proton donor. Substrate-binding positions include 77 to 79 (VES) and 96 to 97 (HE).

It belongs to the GTP cyclohydrolase I family. QueF type 1 subfamily.

Its subcellular location is the cytoplasm. The catalysed reaction is 7-aminomethyl-7-carbaguanine + 2 NADP(+) = 7-cyano-7-deazaguanine + 2 NADPH + 3 H(+). It functions in the pathway tRNA modification; tRNA-queuosine biosynthesis. Catalyzes the NADPH-dependent reduction of 7-cyano-7-deazaguanine (preQ0) to 7-aminomethyl-7-deazaguanine (preQ1). This chain is NADPH-dependent 7-cyano-7-deazaguanine reductase, found in Neisseria gonorrhoeae (strain ATCC 700825 / FA 1090).